Reading from the N-terminus, the 172-residue chain is Large ribosomal subunit protein uL10 (172 aa).

It belongs to the universal ribosomal protein uL10 family. In terms of assembly, part of the ribosomal stalk of the 50S ribosomal subunit. The N-terminus interacts with L11 and the large rRNA to form the base of the stalk. The C-terminus forms an elongated spine to which L12 dimers bind in a sequential fashion forming a multimeric L10(L12)X complex.

Its function is as follows. Forms part of the ribosomal stalk, playing a central role in the interaction of the ribosome with GTP-bound translation factors. The polypeptide is Large ribosomal subunit protein uL10 (rplJ) (Chlamydia trachomatis serovar D (strain ATCC VR-885 / DSM 19411 / UW-3/Cx)).